The chain runs to 483 residues: Isocitrate dehydrogenase [NADP] (483 aa).

Position 74 (Thr74) interacts with NADP(+). Positions 83, 85, 89, 99, and 121 each coordinate D-threo-isocitrate. Asp232 contributes to the Mg(2+) binding site. Residues 264–270 and Asn277 contribute to the NADP(+) site; that span reads HGSAPDI.

Belongs to the isocitrate and isopropylmalate dehydrogenases family. As to quaternary structure, homodimer. The cofactor is Mg(2+). Mn(2+) is required as a cofactor.

The catalysed reaction is D-threo-isocitrate + NADP(+) = 2-oxoglutarate + CO2 + NADPH. In terms of biological role, catalyzes the oxidative decarboxylation of isocitrate to 2-oxoglutarate and carbon dioxide with the concomitant reduction of NADP(+). The polypeptide is Isocitrate dehydrogenase [NADP] (icd) (Rickettsia conorii (strain ATCC VR-613 / Malish 7)).